Consider the following 623-residue polypeptide: Kelch repeat and BTB domain-containing protein 12 (623 aa).

Positions 25-92 (TDVVLVAEGV…MYSSNLPLTA (68 aa)) constitute a BTB domain. The region spanning 127 to 236 (CLGIYYYARD…GVDYLKGTMK (110 aa)) is the BACK domain. Kelch repeat units lie at residues 390–440 (NLYL…RMKG), 441–496 (RLYV…ALNG), 498–551 (IYVL…ASNA), and 557–607 (KLYV…LVAN).

This is Kelch repeat and BTB domain-containing protein 12 (kbtbd12) from Danio rerio (Zebrafish).